The chain runs to 81 residues: ATP synthase subunit c (81 aa).

Transmembrane regions (helical) follow at residues 5–25 (IAAG…IGAG) and 57–77 (VGLV…FVFA).

Belongs to the ATPase C chain family. F-type ATPases have 2 components, F(1) - the catalytic core - and F(0) - the membrane proton channel. F(1) has five subunits: alpha(3), beta(3), gamma(1), delta(1), epsilon(1). F(0) has three main subunits: a(1), b(2) and c(10-14). The alpha and beta chains form an alternating ring which encloses part of the gamma chain. F(1) is attached to F(0) by a central stalk formed by the gamma and epsilon chains, while a peripheral stalk is formed by the delta and b chains.

The protein resides in the cell membrane. In terms of biological role, f(1)F(0) ATP synthase produces ATP from ADP in the presence of a proton or sodium gradient. F-type ATPases consist of two structural domains, F(1) containing the extramembraneous catalytic core and F(0) containing the membrane proton channel, linked together by a central stalk and a peripheral stalk. During catalysis, ATP synthesis in the catalytic domain of F(1) is coupled via a rotary mechanism of the central stalk subunits to proton translocation. Functionally, key component of the F(0) channel; it plays a direct role in translocation across the membrane. A homomeric c-ring of between 10-14 subunits forms the central stalk rotor element with the F(1) delta and epsilon subunits. The polypeptide is ATP synthase subunit c (Mycobacterium sp. (strain JLS)).